Reading from the N-terminus, the 164-residue chain is uncharacterized protein (164 aa).

Residues 144-164 form a disordered region; the sequence is GFISPEKEHESEDMTSQSLVA.

This is an uncharacterized protein from Synechocystis sp. (strain ATCC 27184 / PCC 6803 / Kazusa).